A 359-amino-acid polypeptide reads, in one-letter code: Histidinol-phosphate aminotransferase (359 aa).

Position 217 is an N6-(pyridoxal phosphate)lysine (Lys-217).

Belongs to the class-II pyridoxal-phosphate-dependent aminotransferase family. Histidinol-phosphate aminotransferase subfamily. As to quaternary structure, homodimer. Pyridoxal 5'-phosphate serves as cofactor.

It catalyses the reaction L-histidinol phosphate + 2-oxoglutarate = 3-(imidazol-4-yl)-2-oxopropyl phosphate + L-glutamate. It participates in amino-acid biosynthesis; L-histidine biosynthesis; L-histidine from 5-phospho-alpha-D-ribose 1-diphosphate: step 7/9. This Salmonella heidelberg (strain SL476) protein is Histidinol-phosphate aminotransferase.